The following is a 256-amino-acid chain: UPF0246 protein Bpet1601 (256 aa).

It belongs to the UPF0246 family.

The sequence is that of UPF0246 protein Bpet1601 from Bordetella petrii (strain ATCC BAA-461 / DSM 12804 / CCUG 43448).